We begin with the raw amino-acid sequence, 235 residues long: UPF0758 protein CD630_11440 (235 aa).

An MPN domain is found at 113–235; sequence KIMNPWDIQR…YFSFKENMII (123 aa). Residues H184, H186, and D197 each coordinate Zn(2+). The JAMM motif signature appears at 184–197; sequence HNHPSGSVEPSRED.

The protein belongs to the UPF0758 family.

The protein is UPF0758 protein CD630_11440 of Clostridioides difficile (strain 630) (Peptoclostridium difficile).